Here is a 281-residue protein sequence, read N- to C-terminus: F-actin-capping protein subunit alpha (281 aa).

This sequence belongs to the F-actin-capping protein alpha subunit family. Component of the F-actin capping complex, composed of a heterodimer of an alpha and a beta subunit.

The protein localises to the cytoplasm. It localises to the cytoskeleton. F-actin-capping proteins bind in a Ca(2+)-independent manner to the fast growing ends of actin filaments (barbed end) thereby blocking the exchange of subunits at these ends. Unlike other capping proteins (such as gelsolin and severin), these proteins do not sever actin filaments. This chain is F-actin-capping protein subunit alpha (acpB), found in Dictyostelium discoideum (Social amoeba).